Consider the following 288-residue polypeptide: MKKLFLIGKSLKHSISPFIHNRILSEFDIDAIYSNLELLDTEMLKEFVEMVRKDEDVVGFNITIPYKEDILEFCDEVSEDVRIIKAANTVKKEDGKLLAYNTDWIGFKRSLEDRGVDVKDKKILVLGSGGAAKACIYGLYRMGAKEVFVANRTYEKAEKLKEVFQDILKILPVEWLRRYEFKYDIIINTTSVGMFPNIESSPFDFENYVAGVPVFVYDMIYNPLKTAFLKEAEKKGIKIENGLKMLVYQAIEAEMIWFDIVNLSPNFLLEILNDTEKNFGLGIYKVIG.

Shikimate contacts are provided by residues 14 to 16 and threonine 63; that span reads SIS. The active-site Proton acceptor is lysine 67. Glutamate 79 serves as a coordination point for NADP(+). Shikimate-binding residues include asparagine 88 and aspartate 103. Residues 127–131, 151–156, and methionine 219 contribute to the NADP(+) site; these read GSGGA and NRTYEK. Tyrosine 221 is a binding site for shikimate. Glycine 242 lines the NADP(+) pocket.

The protein belongs to the shikimate dehydrogenase family. As to quaternary structure, homodimer.

It carries out the reaction shikimate + NADP(+) = 3-dehydroshikimate + NADPH + H(+). Its pathway is metabolic intermediate biosynthesis; chorismate biosynthesis; chorismate from D-erythrose 4-phosphate and phosphoenolpyruvate: step 4/7. Functionally, involved in the biosynthesis of the chorismate, which leads to the biosynthesis of aromatic amino acids. Catalyzes the reversible NADPH linked reduction of 3-dehydroshikimate (DHSA) to yield shikimate (SA). The protein is Shikimate dehydrogenase (NADP(+)) of Caldicellulosiruptor bescii (strain ATCC BAA-1888 / DSM 6725 / KCTC 15123 / Z-1320) (Anaerocellum thermophilum).